The following is a 290-amino-acid chain: 4-hydroxybenzoate octaprenyltransferase (290 aa).

A run of 8 helical transmembrane segments spans residues 23-43, 46-66, 99-119, 141-161, 163-183, 213-233, 234-254, and 268-288; these read IGALLLLWPTLWALWVATPGV, LWILAVFVAGVWLMRAAGCVV, LFVVLVLISFLLVLTLNTMTI, LPQVVLGAAFGWSIPMAFAAV, ESVPLSCWLMFLANILWAVAY, LIIGIFQIGVLALMAIIGELN, GLGWGYYWSILVAGALFVYQQ, and AFMNNNYVGLVLFLGLAMSYW.

This sequence belongs to the UbiA prenyltransferase family. Mg(2+) is required as a cofactor.

Its subcellular location is the cell inner membrane. It catalyses the reaction all-trans-octaprenyl diphosphate + 4-hydroxybenzoate = 4-hydroxy-3-(all-trans-octaprenyl)benzoate + diphosphate. Its pathway is cofactor biosynthesis; ubiquinone biosynthesis. Functionally, catalyzes the prenylation of para-hydroxybenzoate (PHB) with an all-trans polyprenyl group. Mediates the second step in the final reaction sequence of ubiquinone-8 (UQ-8) biosynthesis, which is the condensation of the polyisoprenoid side chain with PHB, generating the first membrane-bound Q intermediate 3-octaprenyl-4-hydroxybenzoate. This is 4-hydroxybenzoate octaprenyltransferase from Escherichia coli (strain UTI89 / UPEC).